The primary structure comprises 543 residues: Probable protein kinase UbiB (543 aa).

Residues 123–500 (DFDQQPLASA…HRRHAQARFL (378 aa)) form the Protein kinase domain. Residues 129–137 (LASASVAQV) and Lys152 each bind ATP. The active-site Proton acceptor is the Asp286. Transmembrane regions (helical) follow at residues 499 to 519 (FLLG…PTHE) and 521 to 541 (LASA…WKIS).

It belongs to the ABC1 family. UbiB subfamily.

It is found in the cell inner membrane. Its pathway is cofactor biosynthesis; ubiquinone biosynthesis [regulation]. In terms of biological role, is probably a protein kinase regulator of UbiI activity which is involved in aerobic coenzyme Q (ubiquinone) biosynthesis. This Tolumonas auensis (strain DSM 9187 / NBRC 110442 / TA 4) protein is Probable protein kinase UbiB.